A 581-amino-acid chain; its full sequence is Estrogen receptor (581 aa).

The tract at residues 1–144 (MYPEDSRVSG…GFEMAKEMRF (144 aa)) is modulating. Disordered stretches follow at residues 45 to 66 (APLDAHGPPSDGSLQSLGSGPN) and 99 to 123 (RSSVPSSQHSVSREDQCGTSDDSYS). A compositionally biased stretch (polar residues) spans 56 to 66 (GSLQSLGSGPN). The nuclear receptor DNA-binding region spans 142-217 (MRFCAVCSDY…VGMMKGGVRK (76 aa)). 2 NR C4-type zinc fingers span residues 145–165 (CAVCSDYASGYHYGVWSCEGC) and 181–200 (CPATNQCTIDRNRRKSCQAC). A hinge region spans residues 211-272 (MKGGVRKDRG…GGGKSSVISM (62 aa)). A compositionally biased stretch (basic and acidic residues) spans 216–246 (RKDRGRVLRRDKRRTGTSDRDKASKGLEHRT). The interval 216–269 (RKDRGRVLRRDKRRTGTSDRDKASKGLEHRTAPPQDRRKHISSSAGGGGGKSSV) is disordered. In terms of domain architecture, NR LBD spans 273–509 (PPDQVLLLLR…DLLLEMLDAH (237 aa)). A compositionally biased stretch (basic and acidic residues) spans 514-528 (PDRPAETWSQADREP). Residues 514 to 581 (PDRPAETWSQ…VHPHPMKPTE (68 aa)) are disordered. The span at 572–581 (VHPHPMKPTE) shows a compositional bias: basic residues.

This sequence belongs to the nuclear hormone receptor family. NR3 subfamily. Binds DNA as a homodimer. Can form a heterodimer with ER-beta.

The protein resides in the nucleus. In terms of biological role, the steroid hormones and their receptors are involved in the regulation of eukaryotic gene expression and affect cellular proliferation and differentiation in target tissues. The polypeptide is Estrogen receptor (esr1) (Sparus aurata (Gilthead sea bream)).